The sequence spans 365 residues: Chorismate synthase (365 aa).

Residue Arg-46 participates in NADP(+) binding. FMN is bound by residues 123–125, 241–242, Gly-281, 296–300, and Arg-322; these read RSS, NG, and KPTPS.

It belongs to the chorismate synthase family. Homotetramer. FMNH2 serves as cofactor.

It carries out the reaction 5-O-(1-carboxyvinyl)-3-phosphoshikimate = chorismate + phosphate. The protein operates within metabolic intermediate biosynthesis; chorismate biosynthesis; chorismate from D-erythrose 4-phosphate and phosphoenolpyruvate: step 7/7. In terms of biological role, catalyzes the anti-1,4-elimination of the C-3 phosphate and the C-6 proR hydrogen from 5-enolpyruvylshikimate-3-phosphate (EPSP) to yield chorismate, which is the branch point compound that serves as the starting substrate for the three terminal pathways of aromatic amino acid biosynthesis. This reaction introduces a second double bond into the aromatic ring system. The protein is Chorismate synthase of Helicobacter pylori (strain HPAG1).